Reading from the N-terminus, the 205-residue chain is FAS-associated death domain protein (205 aa).

In terms of domain architecture, DED spans 3 to 81 (PFLVLLHSLS…RHDLLQRLDD (79 aa)). The Death domain occupies 97–181 (LQVAFDIVCD…LVADLVEEAQ (85 aa)). Residues 181–205 (QESVSKSENMSPVLRDSTVSSSETP) are disordered. Ser191 is subject to Phosphoserine.

In terms of assembly, can self-associate. Component of the AIM2 PANoptosome complex, a multiprotein complex that drives inflammatory cell death (PANoptosis). Component of the death-induced signaling complex (DISC) composed of cell surface receptor FAS/CD95 or TNFRSF1A, adapter protein FADD and the CASP8 protease; recruitment of CASP8 to the complex is required for processing of CASP8 into the p18 and p10 subunits. Interacts (via death domain) with FAS (via death domain). Interacts directly (via DED domain) with NOL3 (via CARD domain); inhibits death-inducing signaling complex (DISC) assembly by inhibiting the increase in FAS-FADD binding induced by FAS activation. Interacts with CFLAR, PEA15 and MBD4. When phosphorylated, part of a complex containing HIPK3 and FAS. May interact with MAVS/IPS1. Interacts with MOCV v-CFLAR protein and PIDD1. Interacts with RIPK1 and TRADD. Interacts with stimulated TNFRSF10B. Interacts with DDX24.

The protein resides in the cytoplasm. Its function is as follows. Apoptotic adapter molecule that recruits caspases CASP8 or CASP10 to the activated FAS/CD95 or TNFRSF1A/TNFR-1 receptors. The resulting aggregate called the death-inducing signaling complex (DISC) performs CASP8 proteolytic activation. Active CASP8 initiates the subsequent cascade of caspases mediating apoptosis. Involved in interferon-mediated antiviral immune response, playing a role in the positive regulation of interferon signaling. In Mus musculus (Mouse), this protein is FAS-associated death domain protein.